The following is a 409-amino-acid chain: Autophagy-related protein 37 (409 aa).

The Cytoplasmic segment spans residues 1–313 (MSESIDRVFV…LKLIKTVIKH (313 aa)). The ACB domain occupies 5-103 (IDRVFVKAIG…LIDTMKQFAS (99 aa)). A helical membrane pass occupies residues 314–334 (VAIDAVIIAVLVAVIKRSIII). Topologically, residues 335–409 (PNLISNEISL…VSRIRLIKRN (75 aa)) are peroxisomal.

Belongs to the ATG37 family. In terms of assembly, interacts with ATG30 and PEX3. Post-translationally, phosphorylated.

The protein resides in the peroxisome membrane. Acyl-CoA binding protein which acts as the peroxisome receptor for pexophagy. Required for both micropexophagy and macropexophagy, but not for the cytoplasm to vacuole transport (Cvt) or autophagy pathways. Required for functional micropexophagic apparatus (MIPA) and relocation of ATG11 to the peroxisome-sequestering arms of the vacuole. Binds palmitoyl-CoA but not oleyl-CoA. This chain is Autophagy-related protein 37, found in Komagataella phaffii (strain GS115 / ATCC 20864) (Yeast).